A 68-amino-acid polypeptide reads, in one-letter code: Beta-defensin 1 (68 aa).

Positions 1-21 (MRTSYLLLFTLCLLMSEMASG) are cleaved as a signal peptide. Positions 22-32 (DNFLTGLGHRS) are excised as a propeptide. 3 disulfides stabilise this stretch: cysteine 37-cysteine 66, cysteine 44-cysteine 59, and cysteine 49-cysteine 67.

The protein belongs to the beta-defensin family. As to quaternary structure, monomer. Homodimer.

It localises to the secreted. The protein resides in the membrane. Has bactericidal activity. May act as a ligand for C-C chemokine receptor CCR6. Positively regulates the sperm motility and bactericidal activity in a CCR6-dependent manner. Binds to CCR6 and triggers Ca2+ mobilization in the sperm which is important for its motility. The chain is Beta-defensin 1 (DEFB1) from Presbytis melalophos (Mitred leaf monkey).